We begin with the raw amino-acid sequence, 80 residues long: Conotoxin Cl11.2 (80 aa).

Positions 1–19 (MKMSVTFLLILMILPLFTG) are cleaved as a signal peptide. Residues 20–41 (EWQSGSRLSALKKRLLEKRLLQ) constitute a propeptide that is removed on maturation. 4 disulfide bridges follow: Cys-45-Cys-59, Cys-52-Cys-63, Cys-58-Cys-68, and Cys-62-Cys-74.

This sequence belongs to the conotoxin I1 superfamily. In terms of tissue distribution, expressed by the venom duct.

It is found in the secreted. The sequence is that of Conotoxin Cl11.2 from Californiconus californicus (California cone).